We begin with the raw amino-acid sequence, 86 residues long: Small ribosomal subunit protein bS20 (86 aa).

Belongs to the bacterial ribosomal protein bS20 family.

Binds directly to 16S ribosomal RNA. The protein is Small ribosomal subunit protein bS20 of Kineococcus radiotolerans (strain ATCC BAA-149 / DSM 14245 / SRS30216).